The primary structure comprises 1088 residues: RNA-directed RNA polymerase (1088 aa).

A RdRp catalytic domain is found at 501-687 (LSYGDVTRFL…AKRYLAGGKI (187 aa)).

It belongs to the reoviridae RNA-directed RNA polymerase family. As to quaternary structure, interacts with VP3 (Potential). Interacts with VP2; this interaction activates VP1. Interacts with NSP5; this interaction is probably necessary for the formation of functional virus factories. Interacts with NSP2; this interaction is weak. Requires Mg(2+) as cofactor.

The protein localises to the virion. It catalyses the reaction RNA(n) + a ribonucleoside 5'-triphosphate = RNA(n+1) + diphosphate. Its function is as follows. RNA-directed RNA polymerase that is involved in both transcription and genome replication. Together with VP3 capping enzyme, forms an enzyme complex positioned near the channels situated at each of the five-fold vertices of the core. Following infection, the outermost layer of the virus is lost, leaving a double-layered particle (DLP) made up of the core and VP6 shell. VP1 then catalyzes the transcription of fully conservative plus-strand genomic RNAs that are extruded through the DLP's channels into the cytoplasm where they function as mRNAs for translation of viral proteins. One copy of each of the viral (+)RNAs is also recruited during core assembly, together with newly synthesized polymerase complexes and VP2. The polymerase of these novo-formed particles catalyzes the synthesis of complementary minus-strands leading to dsRNA formation. To do so, the polymerase specifically recognizes and binds 4 bases 5'-UGUG-3' in the conserved 3'-sequence of plus-strand RNA templates. VP2 presumably activates the autoinhibited VP1-RNA complex to coordinate packaging and genome replication. Once dsRNA synthesis is complete, the polymerase switches to the transcriptional mode, thus providing secondary transcription. This is RNA-directed RNA polymerase from Rotavirus A (strain RVA/Human/Japan/KU/1995/G1P1A[8]) (RV-A).